The following is a 291-amino-acid chain: MAEQKKQLLIVTGMSGAGKTVAIKALEDMGYFVVDNLPPELLGSFWELINNSSDFSKAAVVVDLRVKSFYKDLVDEIKSLEDSQNVQSTVLFLDASDDVLVSRYKETRRLPPLAHTGRLLDGIQEERNILSRTKNISNIIIDTSHLSTKELKTKLVDKFGDNRTRTFSIEVMSFGFKYGIPIDADIVMDVRFLPNPFYIPQLKPFTGLDRRVFDYVMSKKETKEFYAKFLDMLETAIPGYIAEGKEKLTIAIGCTGGQHRSVSIARQLAVDLAKKYPVDISHREISRYIGQ.

Position 13 to 20 (13 to 20 (GMSGAGKT)) interacts with ATP. Residue 63–66 (DLRV) participates in GTP binding.

It belongs to the RapZ-like family.

Functionally, displays ATPase and GTPase activities. The protein is Nucleotide-binding protein LJ_0866 of Lactobacillus johnsonii (strain CNCM I-12250 / La1 / NCC 533).